Reading from the N-terminus, the 206-residue chain is tRNA(Phe) 7-((3-amino-3-carboxypropyl)-4-demethylwyosine(37)-N(4))-methyltransferase 2 (206 aa).

It belongs to the TYW3 family.

The catalysed reaction is 4-demethyl-7-[(3S)-3-amino-3-carboxypropyl]wyosine(37) in tRNA(Phe) + S-adenosyl-L-methionine = 7-[(3S)-3-amino-3-carboxypropyl]wyosine(37) in tRNA(Phe) + S-adenosyl-L-homocysteine + H(+). In terms of biological role, S-adenosyl-L-methionine-dependent methyltransferase that acts as a component of the wyosine derivatives biosynthesis pathway. Probably methylates N-4 position of wybutosine-86 to produce wybutosine-72. This Pyrococcus horikoshii (strain ATCC 700860 / DSM 12428 / JCM 9974 / NBRC 100139 / OT-3) protein is tRNA(Phe) 7-((3-amino-3-carboxypropyl)-4-demethylwyosine(37)-N(4))-methyltransferase 2.